Here is a 193-residue protein sequence, read N- to C-terminus: dCTP deaminase (193 aa).

Residues 110–115 (RSSLAR), Asp-128, 136–138 (VLE), Tyr-171, Lys-178, and Gln-182 contribute to the dCTP site. Glu-138 acts as the Proton donor/acceptor in catalysis. The tract at residues 169–193 (RPYNSRQDAKYRGQQGAVASRIDKD) is disordered.

This sequence belongs to the dCTP deaminase family. In terms of assembly, homotrimer.

The enzyme catalyses dCTP + H2O + H(+) = dUTP + NH4(+). It participates in pyrimidine metabolism; dUMP biosynthesis; dUMP from dCTP (dUTP route): step 1/2. Catalyzes the deamination of dCTP to dUTP. This Yersinia pestis bv. Antiqua (strain Antiqua) protein is dCTP deaminase.